Consider the following 216-residue polypeptide: ATP phosphoribosyltransferase (216 aa).

The protein belongs to the ATP phosphoribosyltransferase family. Short subfamily. In terms of assembly, heteromultimer composed of HisG and HisZ subunits.

The protein localises to the cytoplasm. The enzyme catalyses 1-(5-phospho-beta-D-ribosyl)-ATP + diphosphate = 5-phospho-alpha-D-ribose 1-diphosphate + ATP. It participates in amino-acid biosynthesis; L-histidine biosynthesis; L-histidine from 5-phospho-alpha-D-ribose 1-diphosphate: step 1/9. In terms of biological role, catalyzes the condensation of ATP and 5-phosphoribose 1-diphosphate to form N'-(5'-phosphoribosyl)-ATP (PR-ATP). Has a crucial role in the pathway because the rate of histidine biosynthesis seems to be controlled primarily by regulation of HisG enzymatic activity. This Microcystis aeruginosa (strain NIES-843 / IAM M-2473) protein is ATP phosphoribosyltransferase.